We begin with the raw amino-acid sequence, 785 residues long: Arrestin domain-containing protein D (785 aa).

5 disordered regions span residues 29–69 (QNES…SKYP), 172–205 (ILLPTTTSTQNSTLSPTLLSSNLNSKSSTTTTTT), 326–367 (SNNS…ITNN), 435–486 (SNSN…SDHN), and 608–642 (YSSSGSGSGSGSSNSNSNHSSSNYLNEQEENLDEQ). Residues 173 to 205 (LLPTTTSTQNSTLSPTLLSSNLNSKSSTTTTTT) are compositionally biased toward low complexity. Residues 435-450 (SNSNSSSSGGSSNKNN) are compositionally biased toward low complexity. Basic residues predominate over residues 466–478 (SNKKSSGSHRYHY). Residues 608 to 633 (YSSSGSGSGSGSSNSNSNHSSSNYLN) are compositionally biased toward low complexity. An FYVE-type zinc finger spans residues 682–742 (ESSITNCNLC…ICLMCFDAVK (61 aa)). Zn(2+) is bound by residues Cys-688, Cys-691, Cys-704, Cys-707, Cys-712, Cys-715, Cys-734, and Cys-737. Residues 688–738 (CNLCDNTFTIIRRTHHCRACGGVFCEACSNQKVCLYGFGVNNKVRICLMCF) form an RING-type; degenerate zinc finger.

This sequence belongs to the arrestin family.

The chain is Arrestin domain-containing protein D (adcD) from Dictyostelium discoideum (Social amoeba).